A 339-amino-acid polypeptide reads, in one-letter code: Exopolyphosphatase 1 (339 aa).

Residues 315 to 339 (QTSVRDTRGQEVDRNAANRSRGDKT) form a disordered region. A compositionally biased stretch (basic and acidic residues) spans 319-339 (RDTRGQEVDRNAANRSRGDKT).

This sequence belongs to the GppA/Ppx family. In terms of assembly, homodimer.

The enzyme catalyses [phosphate](n) + H2O = [phosphate](n-1) + phosphate + H(+). In terms of biological role, degradation of inorganic polyphosphates (polyP). Releases orthophosphate processively from the ends of the polyP chain. The protein is Exopolyphosphatase 1 of Mycobacterium leprae (strain TN).